A 443-amino-acid polypeptide reads, in one-letter code: KH domain-containing, RNA-binding, signal transduction-associated protein 1 (443 aa).

A disordered region spans residues 1-95 (MQRRDDPAAR…LLPPSATAAA (95 aa)). Residues serine 18 and serine 20 each carry the phosphoserine modification. Lysine 21 is modified (N6-acetyllysine). At serine 29 the chain carries Phosphoserine. Threonine 33 carries the phosphothreonine modification. Asymmetric dimethylarginine; by PRMT1 is present on residues arginine 45 and arginine 52. Serine 58 carries the post-translational modification Phosphoserine. Residues 61–72 (TQPPPLLPPSNP) are compositionally biased toward pro residues. The span at 81–95 (SAPTPLLPPSATAAA) shows a compositional bias: low complexity. Residue threonine 84 is modified to Phosphothreonine; by MAPK1. Residues lysine 96 and lysine 102 each participate in a glycyl lysine isopeptide (Lys-Gly) (interchain with G-Cter in SUMO2) cross-link. Residues 100–260 (ENKYLPELMA…VKKFLVPDMM (161 aa)) are involved in homodimerization. At serine 113 the chain carries Phosphoserine. Lysine 139 participates in a covalent cross-link: Glycyl lysine isopeptide (Lys-Gly) (interchain with G-Cter in SUMO2). Phosphoserine is present on serine 150. The KH domain occupies 171 to 197 (NFVGKILGPQGNTIKRLQEETGAKISV). Lysine 175 is modified (N6-acetyllysine; alternate). Lysine 175 is covalently cross-linked (Glycyl lysine isopeptide (Lys-Gly) (interchain with G-Cter in SUMO2); alternate). Threonine 183 is subject to Phosphothreonine. Residues 280 to 317 (PSRGRGVSVRGRGAAPPPPPVPRGRGVGPPRGALVRGT) form a disordered region. Omega-N-methylarginine is present on residues arginine 282, arginine 284, and arginine 291. Low complexity predominate over residues 283–293 (GRGVSVRGRGA). The residue at position 304 (arginine 304) is an Asymmetric dimethylarginine; by PRMT1. A compositionally biased stretch (low complexity) spans 307 to 316 (GPPRGALVRG). An omega-N-methylarginine; by PRMT1 mark is found at arginine 310 and arginine 315. Position 320 is a dimethylated arginine; alternate (arginine 320). Omega-N-methylarginine; by PRMT1; alternate is present on arginine 320. Omega-N-methylarginine; by PRMT1 is present on arginine 325. Residues 326–345 (GATVTRGVPPPPTVRGAPTP) form a disordered region. Dimethylated arginine; alternate occurs at positions 331 and 340. Omega-N-methylarginine; by PRMT1; alternate is present on residues arginine 331 and arginine 340. Asymmetric dimethylarginine; alternate is present on arginine 331. Residues 351–443 (GIQRIPLPPT…AYREHPYGRY (93 aa)) form an interaction with HNRNPA1 region. Tyrosine 387 carries the phosphotyrosine modification. Position 390 is a phosphoserine (serine 390). The segment at 400–420 (GHGELQDSYEAYGQDDWNGTR) is interaction with ZBTB7A. Residues 411–443 (YGQDDWNGTRPSLKAPPARPVKGAYREHPYGRY) form a disordered region. Lysine 432 participates in a covalent cross-link: Glycyl lysine isopeptide (Lys-Gly) (interchain with G-Cter in SUMO2). The span at 434–443 (AYREHPYGRY) shows a compositional bias: basic and acidic residues. Phosphotyrosine; by PTK6 is present on residues tyrosine 435, tyrosine 440, and tyrosine 443.

This sequence belongs to the KHDRBS family. As to quaternary structure, self-associates to form homooligomers when bound to RNA, oligomerization appears to be limited when binding to proteins. Interacts with KHDRBS3/SLIM-2. Forms a trimeric complex in the nucleus consisting of BANP, HDAC6 and KHDRBS1/SAM68; HDAC6 keeps KHDRBS1 in a deacetylated state which inhibits the inclusion of CD44 alternate exons. The complex is disrupted by MAPK1/MAPK3-mediated phosphorylation of BANP which results in BANP export to the cytoplasm. This facilitates acetylation of KHDRBS1 and CD44 variant exon inclusion. Interacts with KHDRBS2/SLIM-1; heterooligomer formation of KHDRBS family proteins may modulate RNA substrate specificity. Interacts with PIK3R1, PLCG1. Interacts with RASA1, GRB2, SRC, CBP, PRMT1, APC, HNRNPA1. Interacts with PTK6 (via SH3 and SH2 domains). Forms a complex with ILF2, ILF3, YLPM1, RBMX, NCOA5 and PPP1CA. Binds WBP4/FBP21 (via WW domains), FNBP4/FBP30 (via WW domains). Interacts (via Arg/Gly-rich-flanked Pro-rich regions) with FYN (via the SH3 domain). Interacts with the non-receptor tyrosine kinase SRMS; the interaction leads to phosphorylation of KHDRBS1. Interacts with ZBTB7A; negatively regulates KHDRBS1 splicing activity toward BCL2L1. In terms of processing, tyrosine phosphorylated by several non-receptor tyrosine kinases including LCK, FYN and JAK3. Also tyrosine phosphorylated by the non-receptor tyrosine kinase SRMS in an EGF-dependent manner. Phosphorylation by PTK6 negatively regulates its RNA binding ability. Phosphorylation by PTK6 at Tyr-440 dictates the nuclear localization of KHDRBS1. Post-translationally, acetylated. Positively correlates with ability to bind RNA. Deacetylated by HDAC6; this regulates alternative splicing by inhibiting the inclusion of CD44 alternate exons. Arginine methylation is required for nuclear localization, Inhibits interaction with Src-like SH3 domains, but not interaction with WW domains of WBP4/FBP21 and FNBP4/FBP30.

It localises to the nucleus. It is found in the cytoplasm. The protein resides in the membrane. Its function is as follows. Recruited and tyrosine phosphorylated by several receptor systems, for example the T-cell, leptin and insulin receptors. Once phosphorylated, functions as an adapter protein in signal transduction cascades by binding to SH2 and SH3 domain-containing proteins. Role in G2-M progression in the cell cycle. Represses CBP-dependent transcriptional activation apparently by competing with other nuclear factors for binding to CBP. Also acts as a putative regulator of mRNA stability and/or translation rates and mediates mRNA nuclear export. Positively regulates the association of constitutive transport element (CTE)-containing mRNA with large polyribosomes and translation initiation. May not be involved in the nucleocytoplasmic export of unspliced (CTE)-containing RNA species. RNA-binding protein that plays a role in the regulation of alternative splicing and influences mRNA splice site selection and exon inclusion. Binds to RNA containing 5'-[AU]UAA-3' as a bipartite motif spaced by more than 15 nucleotides. Binds poly(A). Can regulate CD44 alternative splicing in a Ras pathway-dependent manner. In cooperation with HNRNPA1 modulates alternative splicing of BCL2L1 by promoting splicing toward isoform Bcl-X(S), and of SMN1. Can regulate alternative splicing of NRXN1 and NRXN3 in the laminin G-like domain 6 containing the evolutionary conserved neurexin alternative spliced segment 4 (AS4) involved in neurexin selective targeting to postsynaptic partners. In a neuronal activity-dependent manner cooperates synergistically with KHDRBS2/SLIM-1 in regulation of NRXN1 exon skipping at AS4. The cooperation with KHDRBS2/SLIM-1 is antagonistic for regulation of NXRN3 alternative splicing at AS4. This chain is KH domain-containing, RNA-binding, signal transduction-associated protein 1, found in Rattus norvegicus (Rat).